Reading from the N-terminus, the 178-residue chain is MGNSLLRENRRQQNTQEMPWNVRMQSPKQRTSRCWDHHIAEGCFCLPWKKILIFEKRQDSQNENERMSSTPIQDNVDQTYSEELCYTLINHRVLCTRPSGNSAEEYYENVPCKAERPRESLGGTETEYSLLHMPSTDPRHARSPEDEYELLMPHRISSHFLQQPRPLMAPSETQFSHL.

The residue at position 99 (Ser99) is a Phosphoserine. A Phosphotyrosine modification is found at Tyr148.

Interacts with ACTB and MYH2; the interaction with MYH2 is increased by IL6-induced phosphorylation. Interacts (via C-terminus) with ARHGEF11 (via DH domain). Interacts with ARHGEF12. Interacts with SYK; the interaction increases after B-cell receptor stimulation, resulting in enhanced SYK autophosphorylation and activity. Phosphorylation on tyrosine residues can be induced by IL6. Phosphorylation is mediated by LYN. Post-translationally, targeted by the ubiquitin E3 ligase subunit FBXO10 to mediate its ubiquitination and degradation. In terms of tissue distribution, expressed in diffuse large B-cell lymphoma (DLBCL) and several germinal center (GC)-like lymphoma cell lines (at protein level). Highly expressed in normal GC lymphocytes and GC-derived malignancies. Expressed in thymus and spleen.

The protein localises to the cytoplasm. It localises to the cell membrane. In terms of biological role, involved in the negative regulation of lymphocyte motility. It mediates the migration-inhibitory effects of IL6. Serves as a positive regulator of the RhoA signaling pathway. Enhancement of RhoA activation results in inhibition of lymphocyte and lymphoma cell motility by activation of its downstream effector ROCK. Is a regulator of B-cell receptor signaling, that acts through SYK kinase activation. The polypeptide is Germinal center-associated signaling and motility protein (GCSAM) (Homo sapiens (Human)).